We begin with the raw amino-acid sequence, 383 residues long: Succinyl-diaminopimelate desuccinylase (383 aa).

Histidine 73 serves as a coordination point for Zn(2+). Aspartate 75 is an active-site residue. Aspartate 107 is a binding site for Zn(2+). Glutamate 141 functions as the Proton acceptor in the catalytic mechanism. Residues glutamate 142, glutamate 170, and histidine 356 each contribute to the Zn(2+) site.

Belongs to the peptidase M20A family. DapE subfamily. As to quaternary structure, homodimer. The cofactor is Zn(2+). Requires Co(2+) as cofactor.

It catalyses the reaction N-succinyl-(2S,6S)-2,6-diaminopimelate + H2O = (2S,6S)-2,6-diaminopimelate + succinate. Its pathway is amino-acid biosynthesis; L-lysine biosynthesis via DAP pathway; LL-2,6-diaminopimelate from (S)-tetrahydrodipicolinate (succinylase route): step 3/3. Catalyzes the hydrolysis of N-succinyl-L,L-diaminopimelic acid (SDAP), forming succinate and LL-2,6-diaminopimelate (DAP), an intermediate involved in the bacterial biosynthesis of lysine and meso-diaminopimelic acid, an essential component of bacterial cell walls. The sequence is that of Succinyl-diaminopimelate desuccinylase from Pseudomonas putida (strain ATCC 700007 / DSM 6899 / JCM 31910 / BCRC 17059 / LMG 24140 / F1).